The sequence spans 330 residues: Aspartate--ammonia ligase (330 aa).

This sequence belongs to the class-II aminoacyl-tRNA synthetase family. AsnA subfamily.

It localises to the cytoplasm. The enzyme catalyses L-aspartate + NH4(+) + ATP = L-asparagine + AMP + diphosphate + H(+). It functions in the pathway amino-acid biosynthesis; L-asparagine biosynthesis; L-asparagine from L-aspartate (ammonia route): step 1/1. The protein is Aspartate--ammonia ligase of Klebsiella pneumoniae (strain 342).